Here is a 75-residue protein sequence, read N- to C-terminus: U6-lycotoxin-Ls1g (75 aa).

The N-terminal stretch at 1-21 (MKLLLFTALVLVVISLIEVEA) is a signal peptide. Residues 22–25 (ENER) constitute a propeptide that is removed on maturation.

The protein belongs to the neurotoxin 19 (CSTX) family. 06 (U6-Lctx) subfamily. Post-translationally, contains 4 disulfide bonds. In terms of tissue distribution, expressed by the venom gland.

It localises to the secreted. This Lycosa singoriensis (Wolf spider) protein is U6-lycotoxin-Ls1g.